A 356-amino-acid chain; its full sequence is Phospho-N-acetylmuramoyl-pentapeptide-transferase (356 aa).

A run of 10 helical transmembrane segments spans residues 25–45 (TVAA…SIIA), 70–90 (GTPT…AFLW), 93–113 (LSNI…MIGF), 138–158 (FLIA…GLAL), 164–184 (YFIN…VGTG), 195–215 (GLAI…AYLS), 235–255 (LAVL…FNAP), 258–278 (AIFM…IVAV), 284–304 (IVLA…VIQV), and 333–353 (QVVI…LSTL).

Belongs to the glycosyltransferase 4 family. MraY subfamily. It depends on Mg(2+) as a cofactor.

It localises to the cell inner membrane. It carries out the reaction UDP-N-acetyl-alpha-D-muramoyl-L-alanyl-gamma-D-glutamyl-meso-2,6-diaminopimeloyl-D-alanyl-D-alanine + di-trans,octa-cis-undecaprenyl phosphate = di-trans,octa-cis-undecaprenyl diphospho-N-acetyl-alpha-D-muramoyl-L-alanyl-D-glutamyl-meso-2,6-diaminopimeloyl-D-alanyl-D-alanine + UMP. It functions in the pathway cell wall biogenesis; peptidoglycan biosynthesis. Catalyzes the initial step of the lipid cycle reactions in the biosynthesis of the cell wall peptidoglycan: transfers peptidoglycan precursor phospho-MurNAc-pentapeptide from UDP-MurNAc-pentapeptide onto the lipid carrier undecaprenyl phosphate, yielding undecaprenyl-pyrophosphoryl-MurNAc-pentapeptide, known as lipid I. The protein is Phospho-N-acetylmuramoyl-pentapeptide-transferase of Bartonella quintana (strain Toulouse) (Rochalimaea quintana).